A 98-amino-acid chain; its full sequence is Large ribosomal subunit protein bL28 (98 aa).

It belongs to the bacterial ribosomal protein bL28 family.

In Mesorhizobium japonicum (strain LMG 29417 / CECT 9101 / MAFF 303099) (Mesorhizobium loti (strain MAFF 303099)), this protein is Large ribosomal subunit protein bL28.